The primary structure comprises 397 residues: CCA-adding enzyme (397 aa).

Gly26 and Arg29 together coordinate ATP. Residues Gly26 and Arg29 each coordinate CTP. Mg(2+) is bound by residues Asp39 and Asp41. Arg110, Asp153, Arg156, Arg159, and Arg162 together coordinate ATP. Arg110, Asp153, Arg156, Arg159, and Arg162 together coordinate CTP.

It belongs to the tRNA nucleotidyltransferase/poly(A) polymerase family. Bacterial CCA-adding enzyme type 3 subfamily. Homodimer. Mg(2+) is required as a cofactor.

It carries out the reaction a tRNA precursor + 2 CTP + ATP = a tRNA with a 3' CCA end + 3 diphosphate. The enzyme catalyses a tRNA with a 3' CCA end + 2 CTP + ATP = a tRNA with a 3' CCACCA end + 3 diphosphate. In terms of biological role, catalyzes the addition and repair of the essential 3'-terminal CCA sequence in tRNAs without using a nucleic acid template. Adds these three nucleotides in the order of C, C, and A to the tRNA nucleotide-73, using CTP and ATP as substrates and producing inorganic pyrophosphate. tRNA 3'-terminal CCA addition is required both for tRNA processing and repair. Also involved in tRNA surveillance by mediating tandem CCA addition to generate a CCACCA at the 3' terminus of unstable tRNAs. While stable tRNAs receive only 3'-terminal CCA, unstable tRNAs are marked with CCACCA and rapidly degraded. In Bacillus cytotoxicus (strain DSM 22905 / CIP 110041 / 391-98 / NVH 391-98), this protein is CCA-adding enzyme.